The following is a 186-amino-acid chain: uncharacterized protein (186 aa).

Belongs to the MG032/MG096/MG288 family.

This is an uncharacterized protein from Mycoplasma pneumoniae (strain ATCC 29342 / M129 / Subtype 1) (Mycoplasmoides pneumoniae).